Here is a 105-residue protein sequence, read N- to C-terminus: uncharacterized protein (105 aa).

This is an uncharacterized protein from Orgyia pseudotsugata multicapsid polyhedrosis virus (OpMNPV).